The chain runs to 413 residues: Ras association domain-containing protein 5 (413 aa).

The interval 1–103 (MASPAIGQRP…RPRDVRSIFE (103 aa)) is disordered. A compositionally biased stretch (basic and acidic residues) spans 52 to 74 (SEDRGGRRSGRRDPEPTPRDCRH). A Phorbol-ester/DAG-type zinc finger spans residues 117 to 165 (GHRFVELALRGGPGWCDLCGREVLRQALRCANCKFTCHSECRSLIQLDC). Residues serine 177 and serine 274 each carry the phosphoserine modification. Residues 265–359 (PAATTDKRTS…LSFVLKENET (95 aa)) enclose the Ras-associating domain. The residue at position 347 (threonine 347) is a Phosphothreonine. Residues 361 to 408 (EVEWDAFSIPELQNFLTILEKEEQDKIHQLQKKYNKFRQKLEEALRES) enclose the SARAH domain.

In terms of assembly, interacts directly with activated HRAS; a RASSF5-STK4/MST1 complex probably associates with activated HRAS. Interacts with KRAS. Probably interacts with Ras-like GTPases RRAS, MRAS, RAP1B, RAP2A and RALA. Interacts with RRAS2. Can self-associate. Interacts with RSSF1 isoform A. The RSSF1 isoform A-RSSF5 heterodimer probably mediates the association of RSSF1 with HRAS. Isoform 2 interacts with activated RAP1A and ITGAL/LFA-1. Binds STK4/MST1, inhibiting STK4/MST1 autoactivation.

The protein resides in the cytoplasm. The protein localises to the cytoskeleton. Functionally, potential tumor suppressor. Seems to be involved in lymphocyte adhesion by linking RAP1A activation upon T-cell receptor or chemokine stimulation to integrin activation. Isoform 2 stimulates lymphocyte polarization and the patch-like distribution of ITGAL/LFA-1, resulting in an enhanced adhesion to ICAM1. Together with RAP1A may participate in regulation of microtubule growth. The association of isoform 2 with activated RAP1A is required for directional movement of endothelial cells during wound healing. May be involved in regulation of Ras apoptotic function. The RASSF5-STK4/MST1 complex may mediate HRAS and KRAS induced apoptosis. The sequence is that of Ras association domain-containing protein 5 (Rassf5) from Mus musculus (Mouse).